A 213-amino-acid chain; its full sequence is Large ribosomal subunit protein uL1 (213 aa).

It belongs to the universal ribosomal protein uL1 family. In terms of assembly, part of the 50S ribosomal subunit.

Functionally, binds directly to 23S rRNA. Probably involved in E site tRNA release. Protein L1 is also a translational repressor protein, it controls the translation of its operon by binding to its mRNA. The sequence is that of Large ribosomal subunit protein uL1 from Picrophilus torridus (strain ATCC 700027 / DSM 9790 / JCM 10055 / NBRC 100828 / KAW 2/3).